The chain runs to 229 residues: Enolase-phosphatase E1 (229 aa).

Belongs to the HAD-like hydrolase superfamily. MasA/MtnC family. In terms of assembly, monomer. Requires Mg(2+) as cofactor.

The catalysed reaction is 5-methylsulfanyl-2,3-dioxopentyl phosphate + H2O = 1,2-dihydroxy-5-(methylsulfanyl)pent-1-en-3-one + phosphate. The protein operates within amino-acid biosynthesis; L-methionine biosynthesis via salvage pathway; L-methionine from S-methyl-5-thio-alpha-D-ribose 1-phosphate: step 3/6. Its pathway is amino-acid biosynthesis; L-methionine biosynthesis via salvage pathway; L-methionine from S-methyl-5-thio-alpha-D-ribose 1-phosphate: step 4/6. Its function is as follows. Bifunctional enzyme that catalyzes the enolization of 2,3-diketo-5-methylthiopentyl-1-phosphate (DK-MTP-1-P) into the intermediate 2-hydroxy-3-keto-5-methylthiopentenyl-1-phosphate (HK-MTPenyl-1-P), which is then dephosphorylated to form the acireductone 1,2-dihydroxy-3-keto-5-methylthiopentene (DHK-MTPene). In Yersinia pseudotuberculosis serotype O:1b (strain IP 31758), this protein is Enolase-phosphatase E1.